Here is a 370-residue protein sequence, read N- to C-terminus: MTDTLAAALGRIRPDVRAMHAYAVQPATGVLKMDAMENPFPLPPELQEALGRRLGALALNRYPGARLTDLKSALAAHIGMPEGFSMVLGNGSDEIITLLALACARPGTGERAAMLAPMPGFVMYPMSAQLQGLDFVAVPLTADFELDEPAMLAAIAQHRPAITYLAYPNNPTATLWDEGAVQRVIDAAGAQGGIVVMDEAYQPFASRTWLDRMRAEPVRNAHVLLMRTLSKFGLAGVRLGYLAGPAALVDEIEKVRPPYNVSVLNCEAALFALEHARVFAAQAAELRAVRTRLVAALRAMPGIERVWDSEANMVLVRVPDAARAFEGMKARKVLVKNVSTMHPLLARCLRLTVGSEADNAQMLDALQASL.

Lysine 231 is subject to N6-(pyridoxal phosphate)lysine.

Belongs to the class-II pyridoxal-phosphate-dependent aminotransferase family. Histidinol-phosphate aminotransferase subfamily. In terms of assembly, homodimer. It depends on pyridoxal 5'-phosphate as a cofactor.

The enzyme catalyses L-histidinol phosphate + 2-oxoglutarate = 3-(imidazol-4-yl)-2-oxopropyl phosphate + L-glutamate. It participates in amino-acid biosynthesis; L-histidine biosynthesis; L-histidine from 5-phospho-alpha-D-ribose 1-diphosphate: step 7/9. The polypeptide is Histidinol-phosphate aminotransferase (Paracidovorax citrulli (strain AAC00-1) (Acidovorax citrulli)).